Here is a 216-residue protein sequence, read N- to C-terminus: Probable nicotinate-nucleotide adenylyltransferase (216 aa).

It belongs to the NadD family.

The enzyme catalyses nicotinate beta-D-ribonucleotide + ATP + H(+) = deamido-NAD(+) + diphosphate. The protein operates within cofactor biosynthesis; NAD(+) biosynthesis; deamido-NAD(+) from nicotinate D-ribonucleotide: step 1/1. Catalyzes the reversible adenylation of nicotinate mononucleotide (NaMN) to nicotinic acid adenine dinucleotide (NaAD). The sequence is that of Probable nicotinate-nucleotide adenylyltransferase from Citrifermentans bemidjiense (strain ATCC BAA-1014 / DSM 16622 / JCM 12645 / Bem) (Geobacter bemidjiensis).